A 301-amino-acid polypeptide reads, in one-letter code: 2-methylisocitrate lyase (301 aa).

53-55 (SGA) lines the substrate pocket. Asp92 and Asp94 together coordinate Mg(2+). Substrate is bound by residues 129–130 (CG), Arg162, Glu192, 214–216 (NMT), Arg245, and Arg274.

Belongs to the isocitrate lyase/PEP mutase superfamily. Methylisocitrate lyase family. Requires Mg(2+) as cofactor.

It carries out the reaction 3-hydroxybutane-1,2,3-tricarboxylate = pyruvate + succinate. Involved in the methylcitric acid cycle. Catalyzes the cleavage of 2-methylisocitrate to yield pyruvate and succinate. The chain is 2-methylisocitrate lyase from Bacillus subtilis (strain 168).